A 504-amino-acid chain; its full sequence is Cytochrome P450 monooxygenase braC (504 aa).

The helical transmembrane segment at 4 to 24 (LYLPTIWASTLTAATIFIVAV) threads the bilayer. C448 serves as a coordination point for heme.

The protein belongs to the cytochrome P450 family. It depends on heme as a cofactor.

It is found in the membrane. It participates in secondary metabolite biosynthesis. Functionally, cytochrome P450 monooxygenase; part of the gene cluster that mediates the biosynthesis of the brasilane terpene glycosides brasilane D and E. The biosynthesis starts with the activity of the terpene cyclase braA that converts farnesyl pyrophosphate into the sesquiterpene alcohol trichobrasilenol. Subsequently, trichobrasilenol is glycosylated by the O-glycosyltransferase braB putatively using UDP-GlcNAc as sugar donor to yield brasilane A. The latter then undergoes two rounds of oxidation performed by the cytochrome P450 monooxygenase braC. In the first round braC hydroxylates C-12 forming brasilane D, which serves as substrate in the second round to establish the epoxide at the bond between C-5 and C-10 and oxidize the alcohol at C-12 to an aldehyde leading to the final product brasilane E. This chain is Cytochrome P450 monooxygenase braC, found in Annulohypoxylon truncatum (Hypoxylon truncatum).